We begin with the raw amino-acid sequence, 143 residues long: 3-hydroxyacyl-[acyl-carrier-protein] dehydratase FabZ (143 aa).

His49 is a catalytic residue.

Belongs to the thioester dehydratase family. FabZ subfamily.

It is found in the cytoplasm. It catalyses the reaction a (3R)-hydroxyacyl-[ACP] = a (2E)-enoyl-[ACP] + H2O. Involved in unsaturated fatty acids biosynthesis. Catalyzes the dehydration of short chain beta-hydroxyacyl-ACPs and long chain saturated and unsaturated beta-hydroxyacyl-ACPs. This Wolbachia pipientis wMel protein is 3-hydroxyacyl-[acyl-carrier-protein] dehydratase FabZ.